The primary structure comprises 265 residues: Imidazole glycerol phosphate synthase subunit HisF (265 aa).

Residues Asp-11 and Asp-130 contribute to the active site.

The protein belongs to the HisA/HisF family. Heterodimer of HisH and HisF.

The protein resides in the cytoplasm. The catalysed reaction is 5-[(5-phospho-1-deoxy-D-ribulos-1-ylimino)methylamino]-1-(5-phospho-beta-D-ribosyl)imidazole-4-carboxamide + L-glutamine = D-erythro-1-(imidazol-4-yl)glycerol 3-phosphate + 5-amino-1-(5-phospho-beta-D-ribosyl)imidazole-4-carboxamide + L-glutamate + H(+). The protein operates within amino-acid biosynthesis; L-histidine biosynthesis; L-histidine from 5-phospho-alpha-D-ribose 1-diphosphate: step 5/9. Its function is as follows. IGPS catalyzes the conversion of PRFAR and glutamine to IGP, AICAR and glutamate. The HisF subunit catalyzes the cyclization activity that produces IGP and AICAR from PRFAR using the ammonia provided by the HisH subunit. The polypeptide is Imidazole glycerol phosphate synthase subunit HisF (Idiomarina loihiensis (strain ATCC BAA-735 / DSM 15497 / L2-TR)).